The following is a 166-amino-acid chain: MNYTSYILAFQLCVILGSSGCYCQAPFFDEIENLKKYFNASHPDVADGGPLFLEILKNWKEESDKKIIQSQIVSFYFKLFENLKDNRIIQRSMDIIKQDMFQKFLNGSSEKLEDFKKLIQIPVDNLKVQRKAISELIKVMNDLSPKSNLRKRKRRQNQIQGRRASK.

The first 23 residues, 1 to 23 (MNYTSYILAFQLCVILGSSGCYC), serve as a signal peptide directing secretion. Gln24 carries the pyrrolidone carboxylic acid modification. N-linked (GlcNAc...) asparagine glycans are attached at residues Asn39 and Asn106. The segment at 147–166 (SNLRKRKRRQNQIQGRRASK) is disordered.

Belongs to the type II (or gamma) interferon family. As to quaternary structure, homodimer. Interacts with IFNGR1 (via extracellular domain); this interaction promotes IFNGR1 dimerization. In terms of tissue distribution, released primarily from activated T lymphocytes.

The protein localises to the secreted. Type II interferon produced by immune cells such as T-cells and NK cells that plays crucial roles in antimicrobial, antiviral, and antitumor responses by activating effector immune cells and enhancing antigen presentation. Primarily signals through the JAK-STAT pathway after interaction with its receptor IFNGR1 to affect gene regulation. Upon IFNG binding, IFNGR1 intracellular domain opens out to allow association of downstream signaling components JAK2, JAK1 and STAT1, leading to STAT1 activation, nuclear translocation and transcription of IFNG-regulated genes. Many of the induced genes are transcription factors such as IRF1 that are able to further drive regulation of a next wave of transcription. Plays a role in class I antigen presentation pathway by inducing a replacement of catalytic proteasome subunits with immunoproteasome subunits. In turn, increases the quantity, quality, and repertoire of peptides for class I MHC loading. Increases the efficiency of peptide generation also by inducing the expression of activator PA28 that associates with the proteasome and alters its proteolytic cleavage preference. Up-regulates as well MHC II complexes on the cell surface by promoting expression of several key molecules such as cathepsins B/CTSB, H/CTSH, and L/CTSL. Participates in the regulation of hematopoietic stem cells during development and under homeostatic conditions by affecting their development, quiescence, and differentiation. This Lama glama (Llama) protein is Interferon gamma (IFNG).